The chain runs to 150 residues: 3-dehydroquinate dehydratase (150 aa).

Tyr23 serves as the catalytic Proton acceptor. 3 residues coordinate substrate: Asn79, His85, and Asp92. His105 serves as the catalytic Proton donor. Substrate contacts are provided by residues 106 to 107 (IS) and Arg116.

The protein belongs to the type-II 3-dehydroquinase family. Homododecamer.

The enzyme catalyses 3-dehydroquinate = 3-dehydroshikimate + H2O. Its pathway is metabolic intermediate biosynthesis; chorismate biosynthesis; chorismate from D-erythrose 4-phosphate and phosphoenolpyruvate: step 3/7. Its function is as follows. Catalyzes a trans-dehydration via an enolate intermediate. The protein is 3-dehydroquinate dehydratase of Marinomonas sp. (strain MWYL1).